The following is a 403-amino-acid chain: MHLIFFFSYFLRRYLLLLCAILILRAPLAHSLIPPLTCVNTGTVESDVTGIRFDRCLDTDSLAKISLSTVMSKARVYTDVNVIRPKDYWDYESLNVQWGEQDDYEVVRKVGRGKYSEVFEGINMNNNEKCIIKILKPVKKKKIRREIKILQNLCGGPNIVKLLDVVRDQHSKTPSLIFEYVNSTDFKVLYPTLTDYDIRYYIYELLKALDFCHSQGIMHRDVKPHNVMIDHELRKLRLIDWGLAEFYHPGKEYNVRVASRYFKGPELLVDLQDYDYSLDMWSLGCMFAGMIFRKEPFFYGHDNQDQLVKIAKVLGTDELNAYLNKYQLELDTQLEALVGRHSRKPWSKFINADNRHLVSPEAIDYLDKLLRYDHQDRLTAKEAMAHPYFAQVRAAESSRMRTQ.

An N-terminal signal peptide occupies residues 1–31; the sequence is MHLIFFFSYFLRRYLLLLCAILILRAPLAHS. Residues 104–389 form the Protein kinase domain; sequence YEVVRKVGRG…AKEAMAHPYF (286 aa). Residues 110–118 and K133 each bind ATP; that span reads VGRGKYSEV. N-linked (GlcNAc...) asparagine glycosylation is present at N182. D221 serves as the catalytic Proton acceptor.

The protein belongs to the protein kinase superfamily. Ser/Thr protein kinase family. CK2 subfamily. In terms of assembly, heterotetramer of two catalytic alpha subunits and two regulatory beta subunits. In terms of tissue distribution, seems to be present in all plant organs. But seems to be more expressed than CKA1.

Its subcellular location is the nucleus. It is found in the nucleolus. It carries out the reaction L-seryl-[protein] + ATP = O-phospho-L-seryl-[protein] + ADP + H(+). It catalyses the reaction L-threonyl-[protein] + ATP = O-phospho-L-threonyl-[protein] + ADP + H(+). Its function is as follows. Casein kinases are operationally defined by their preferential utilization of acidic proteins such as caseins as substrates. The alpha chain contains the catalytic site. The tetrameric holoenzyme CK2, composed of two alpha and two beta subunits, phosphorylates the transcription factor PIF1 after an exposure to light, resulting in a proteasome-dependent degradation of PIF1 and promotion of photomorphogenesis. CK2 phosphorylates translation initiation factors. May participate in the regulation of the initiation of translation. Acts as circadian clock component that maintains the correct period length through phosphorylation of CCA1. May act as an ectokinase that phosphorylates several extracellular proteins. The chain is Casein kinase II subunit alpha-2 from Arabidopsis thaliana (Mouse-ear cress).